The following is a 112-amino-acid chain: Urease subunit beta (112 aa).

The protein belongs to the urease beta subunit family. As to quaternary structure, heterotrimer of UreA (gamma), UreB (beta) and UreC (alpha) subunits. Three heterotrimers associate to form the active enzyme.

It is found in the cytoplasm. The catalysed reaction is urea + 2 H2O + H(+) = hydrogencarbonate + 2 NH4(+). Its pathway is nitrogen metabolism; urea degradation; CO(2) and NH(3) from urea (urease route): step 1/1. The chain is Urease subunit beta from Polaromonas sp. (strain JS666 / ATCC BAA-500).